A 208-amino-acid polypeptide reads, in one-letter code: Large ribosomal subunit protein uL3 (208 aa).

The disordered stretch occupies residues 123–146; that stretch reads RHGQSRGPMAHGSRYHRRPGSMGP.

Belongs to the universal ribosomal protein uL3 family. Part of the 50S ribosomal subunit. Forms a cluster with proteins L14 and L19.

Its function is as follows. One of the primary rRNA binding proteins, it binds directly near the 3'-end of the 23S rRNA, where it nucleates assembly of the 50S subunit. The sequence is that of Large ribosomal subunit protein uL3 from Streptococcus thermophilus (strain CNRZ 1066).